A 127-amino-acid chain; its full sequence is S-adenosylmethionine decarboxylase proenzyme 2 (127 aa).

The active-site Schiff-base intermediate with substrate; via pyruvic acid is the serine 63. The residue at position 63 (serine 63) is a Pyruvic acid (Ser); by autocatalysis. Catalysis depends on histidine 68, which acts as the Proton acceptor; for processing activity. Cysteine 83 acts as the Proton donor; for catalytic activity in catalysis.

It belongs to the prokaryotic AdoMetDC family. Type 1 subfamily. In terms of assembly, heterotetramer of two alpha and two beta chains arranged as a dimer of alpha/beta heterodimers. Requires pyruvate as cofactor. Is synthesized initially as an inactive proenzyme. Formation of the active enzyme involves a self-maturation process in which the active site pyruvoyl group is generated from an internal serine residue via an autocatalytic post-translational modification. Two non-identical subunits are generated from the proenzyme in this reaction, and the pyruvate is formed at the N-terminus of the alpha chain, which is derived from the carboxyl end of the proenzyme. The post-translation cleavage follows an unusual pathway, termed non-hydrolytic serinolysis, in which the side chain hydroxyl group of the serine supplies its oxygen atom to form the C-terminus of the beta chain, while the remainder of the serine residue undergoes an oxidative deamination to produce ammonia and the pyruvoyl group blocking the N-terminus of the alpha chain.

The catalysed reaction is S-adenosyl-L-methionine + H(+) = S-adenosyl 3-(methylsulfanyl)propylamine + CO2. The protein operates within amine and polyamine biosynthesis; S-adenosylmethioninamine biosynthesis; S-adenosylmethioninamine from S-adenosyl-L-methionine: step 1/1. Catalyzes the decarboxylation of S-adenosylmethionine to S-adenosylmethioninamine (dcAdoMet), the propylamine donor required for the synthesis of the polyamines spermine and spermidine from the diamine putrescine. The chain is S-adenosylmethionine decarboxylase proenzyme 2 from Halalkalibacterium halodurans (strain ATCC BAA-125 / DSM 18197 / FERM 7344 / JCM 9153 / C-125) (Bacillus halodurans).